The primary structure comprises 67 residues: Conotoxin Cal6.35 (67 aa).

The first 22 residues, 1–22 (MKLTCVLIVAVLILTACQVIAA), serve as a signal peptide directing secretion. Cystine bridges form between cysteine 43–cysteine 53, cysteine 46–cysteine 59, and cysteine 52–cysteine 66.

The protein belongs to the conotoxin O1 superfamily. In terms of tissue distribution, expressed by the venom duct.

Its subcellular location is the secreted. Its function is as follows. Probable neurotoxin. This Californiconus californicus (California cone) protein is Conotoxin Cal6.35.